We begin with the raw amino-acid sequence, 89 residues long: Putative regulatory protein CPE1749 (89 aa).

The protein belongs to the RemA family.

This chain is Putative regulatory protein CPE1749, found in Clostridium perfringens (strain 13 / Type A).